A 421-amino-acid chain; its full sequence is Serine hydroxymethyltransferase (421 aa).

(6S)-5,6,7,8-tetrahydrofolate is bound by residues Leu121 and 125–127 (GHL). N6-(pyridoxal phosphate)lysine is present on Lys229.

It belongs to the SHMT family. Homodimer. The cofactor is pyridoxal 5'-phosphate.

It is found in the cytoplasm. It catalyses the reaction (6R)-5,10-methylene-5,6,7,8-tetrahydrofolate + glycine + H2O = (6S)-5,6,7,8-tetrahydrofolate + L-serine. Its pathway is one-carbon metabolism; tetrahydrofolate interconversion. It participates in amino-acid biosynthesis; glycine biosynthesis; glycine from L-serine: step 1/1. Functionally, catalyzes the reversible interconversion of serine and glycine with tetrahydrofolate (THF) serving as the one-carbon carrier. This reaction serves as the major source of one-carbon groups required for the biosynthesis of purines, thymidylate, methionine, and other important biomolecules. Also exhibits THF-independent aldolase activity toward beta-hydroxyamino acids, producing glycine and aldehydes, via a retro-aldol mechanism. The protein is Serine hydroxymethyltransferase of Actinobacillus pleuropneumoniae serotype 5b (strain L20).